The primary structure comprises 512 residues: Probable cobyric acid synthase (512 aa).

Residues 275-460 (SVTVAVPHLP…LHGLFGNDAA (186 aa)) enclose the GATase cobBQ-type domain. The active-site Nucleophile is cysteine 353. The active site involves histidine 452.

This sequence belongs to the CobB/CobQ family. CobQ subfamily.

It participates in cofactor biosynthesis; adenosylcobalamin biosynthesis. Its function is as follows. Catalyzes amidations at positions B, D, E, and G on adenosylcobyrinic A,C-diamide. NH(2) groups are provided by glutamine, and one molecule of ATP is hydrogenolyzed for each amidation. This chain is Probable cobyric acid synthase, found in Halobacterium salinarum (strain ATCC 29341 / DSM 671 / R1).